We begin with the raw amino-acid sequence, 402 residues long: S-adenosylmethionine synthase (402 aa).

His15 is a binding site for ATP. Residue Asp17 participates in Mg(2+) binding. K(+) is bound at residue Glu43. The L-methionine site is built by Glu56 and Gln99. Positions 99–109 (QSPDIAQGVDT) are flexible loop. ATP contacts are provided by residues 174–176 (DGK), 247–248 (RF), Asp256, 262–263 (RK), Ala279, and Lys283. Asp256 serves as a coordination point for L-methionine. Lys287 lines the L-methionine pocket.

It belongs to the AdoMet synthase family. As to quaternary structure, homotetramer; dimer of dimers. Mg(2+) is required as a cofactor. Requires K(+) as cofactor.

It is found in the cytoplasm. The catalysed reaction is L-methionine + ATP + H2O = S-adenosyl-L-methionine + phosphate + diphosphate. It participates in amino-acid biosynthesis; S-adenosyl-L-methionine biosynthesis; S-adenosyl-L-methionine from L-methionine: step 1/1. Catalyzes the formation of S-adenosylmethionine (AdoMet) from methionine and ATP. The overall synthetic reaction is composed of two sequential steps, AdoMet formation and the subsequent tripolyphosphate hydrolysis which occurs prior to release of AdoMet from the enzyme. The sequence is that of S-adenosylmethionine synthase from Streptomyces avermitilis (strain ATCC 31267 / DSM 46492 / JCM 5070 / NBRC 14893 / NCIMB 12804 / NRRL 8165 / MA-4680).